Consider the following 101-residue polypeptide: Small ribosomal subunit protein bS18c (101 aa).

It belongs to the bacterial ribosomal protein bS18 family. As to quaternary structure, component of the chloroplast small ribosomal subunit (SSU). Mature 70S chloroplast ribosomes of higher plants consist of a small (30S) and a large (50S) subunit. The 30S small subunit contains 1 molecule of ribosomal RNA (16S rRNA) and 24 different proteins. The 50S large subunit contains 3 rRNA molecules (23S, 5S and 4.5S rRNA) and 33 different proteins.

The protein localises to the plastid. The protein resides in the chloroplast. Functionally, component of the chloroplast ribosome (chloro-ribosome), a dedicated translation machinery responsible for the synthesis of chloroplast genome-encoded proteins, including proteins of the transcription and translation machinery and components of the photosynthetic apparatus. The sequence is that of Small ribosomal subunit protein bS18c (RPS18) from Spinacia oleracea (Spinach).